The following is a 301-amino-acid chain: Heme A synthase (301 aa).

Topologically, residues 1 to 7 (MHKGLKR) are cytoplasmic. A helical transmembrane segment spans residues 8 to 28 (LGVITSLGVLLVLIQGALVTN). The Extracellular portion of the chain corresponds to 29–56 (TGSGEGCGQTWPLCFGQVIPLDPPPETV). C35 and C42 are disulfide-bonded. Residues 57–77 (IEFSHRLVAGIVGMLVILMAI) form a helical membrane-spanning segment. The active site involves E58. A heme o-binding site is contributed by H61. The Cytoplasmic portion of the chain corresponds to 78-92 (WSWRRLKHMPETRFL). The chain crosses the membrane as a helical span at residues 93-113 (AVISVFMIIFQGLLGAGAVVF). The Extracellular segment spans residues 114-117 (GQSD). A helical transmembrane segment spans residues 118 to 138 (LIMALHFGFSALSFASVVLLT). Residue H123 coordinates heme o. The Cytoplasmic portion of the chain corresponds to 139–159 (RLAFEDSNPQKQYAPIVSKAY). A helical membrane pass occupies residues 160 to 180 (KGYVIFVAIYSYVAIYTGAYV). The Extracellular segment spans residues 181-215 (KHTNATLACSGFPLCNGQWVPDVFTEAIGVQLLHR). A disulfide bond links C189 and C195. Residue H214 coordinates heme b. The helical transmembrane segment at 216-236 (SAAILLSLLLLVLFIWTVKTF) threads the bilayer. Over 237–240 (RASR) the chain is Cytoplasmic. A helical transmembrane segment spans residues 241–261 (VLVVCASLAMLLVIGQAASGV). The Extracellular segment spans residues 262–274 (AVVLTYNATLTLG). A helical membrane pass occupies residues 275 to 295 (IFHALLISLLFTLLCYMVMLV). Residue H277 participates in heme b binding. Residues 296–301 (TRHKAK) are Cytoplasmic-facing.

Belongs to the COX15/CtaA family. Type 1 subfamily. As to quaternary structure, interacts with CtaB. The cofactor is heme b.

Its subcellular location is the cell membrane. The enzyme catalyses Fe(II)-heme o + 2 A + H2O = Fe(II)-heme a + 2 AH2. It participates in porphyrin-containing compound metabolism; heme A biosynthesis; heme A from heme O: step 1/1. Functionally, catalyzes the conversion of heme O to heme A by two successive hydroxylations of the methyl group at C8. The first hydroxylation forms heme I, the second hydroxylation results in an unstable dihydroxymethyl group, which spontaneously dehydrates, resulting in the formyl group of heme A. The protein is Heme A synthase of Shouchella clausii (strain KSM-K16) (Alkalihalobacillus clausii).